We begin with the raw amino-acid sequence, 332 residues long: o-succinylbenzoate synthase (332 aa).

Lysine 135 acts as the Proton donor in catalysis. Mg(2+) contacts are provided by aspartate 163, glutamate 192, and aspartate 215. Lysine 241 acts as the Proton acceptor in catalysis.

The protein belongs to the mandelate racemase/muconate lactonizing enzyme family. MenC type 1 subfamily. A divalent metal cation serves as cofactor.

It carries out the reaction (1R,6R)-6-hydroxy-2-succinyl-cyclohexa-2,4-diene-1-carboxylate = 2-succinylbenzoate + H2O. It functions in the pathway quinol/quinone metabolism; 1,4-dihydroxy-2-naphthoate biosynthesis; 1,4-dihydroxy-2-naphthoate from chorismate: step 4/7. It participates in quinol/quinone metabolism; menaquinone biosynthesis. In terms of biological role, converts 2-succinyl-6-hydroxy-2,4-cyclohexadiene-1-carboxylate (SHCHC) to 2-succinylbenzoate (OSB). The polypeptide is o-succinylbenzoate synthase (Vibrio cholerae serotype O1 (strain ATCC 39315 / El Tor Inaba N16961)).